We begin with the raw amino-acid sequence, 418 residues long: Histidinol dehydrogenase (418 aa).

The NAD(+) site is built by Tyr119, Gln180, and Asn203. Thr226, Gln248, and His251 together coordinate substrate. Zn(2+)-binding residues include Gln248 and His251. Residues Glu316 and His317 each act as proton acceptor in the active site. Substrate-binding residues include His317, Asp350, Glu404, and His409. Residue Asp350 coordinates Zn(2+). His409 contributes to the Zn(2+) binding site.

This sequence belongs to the histidinol dehydrogenase family. Zn(2+) serves as cofactor.

The enzyme catalyses L-histidinol + 2 NAD(+) + H2O = L-histidine + 2 NADH + 3 H(+). It functions in the pathway amino-acid biosynthesis; L-histidine biosynthesis; L-histidine from 5-phospho-alpha-D-ribose 1-diphosphate: step 9/9. Functionally, catalyzes the sequential NAD-dependent oxidations of L-histidinol to L-histidinaldehyde and then to L-histidine. In Staphylococcus aureus (strain MRSA252), this protein is Histidinol dehydrogenase.